The sequence spans 347 residues: Phosphoribosylformylglycinamidine cyclo-ligase (347 aa).

It belongs to the AIR synthase family.

The protein resides in the cytoplasm. The catalysed reaction is 2-formamido-N(1)-(5-O-phospho-beta-D-ribosyl)acetamidine + ATP = 5-amino-1-(5-phospho-beta-D-ribosyl)imidazole + ADP + phosphate + H(+). The protein operates within purine metabolism; IMP biosynthesis via de novo pathway; 5-amino-1-(5-phospho-D-ribosyl)imidazole from N(2)-formyl-N(1)-(5-phospho-D-ribosyl)glycinamide: step 2/2. The protein is Phosphoribosylformylglycinamidine cyclo-ligase of Hydrogenovibrio crunogenus (strain DSM 25203 / XCL-2) (Thiomicrospira crunogena).